Reading from the N-terminus, the 592-residue chain is Protein kinase C zeta type (592 aa).

One can recognise a PB1 domain in the interval 15–98 (RVRLKAHYGG…EVLIIHVFPS (84 aa)). The segment at 79-145 (AFRLACQGRD…KRFNRRAYCG (67 aa)) is interaction with SQSTM1. The Phorbol-ester/DAG-type zinc finger occupies 130 to 180 (GHLFQAKRFNRRAYCGQCSERIWGLARQGYRCINCKLLVHKRCHVLVPLTC). A Protein kinase domain is found at 252 to 518 (FDLIRVIGRG…FSDIKSHAFF (267 aa)). Residues 258 to 266 (IGRGSYAKV) and K281 contribute to the ATP site. Catalysis depends on D376, which acts as the Proton acceptor. A Phosphothreonine; by PDPK1 and PI3K modification is found at T410. Residues 519-590 (RSIDWDLLEK…INPLLLSAEE (72 aa)) form the AGC-kinase C-terminal domain. T560 is modified (phosphothreonine). Phosphoserine is present on S591.

This sequence belongs to the protein kinase superfamily. AGC Ser/Thr protein kinase family. PKC subfamily. As to quaternary structure, interacts with PARD6A, PARD6B and PARD6G. Part of a complex with PARD3, PARD6A or PARD6B or PARD6G and CDC42 or RAC1. Interacts with ADAP1/CENTA1. Forms a ternary complex with SQSTM1 and KCNAB2. Forms another ternary complex with SQSTM1 and GABRR3. Forms a complex with SQSTM1 and MAP2K5. Interacts (via the protein kinase domain) with WWC1. Forms a tripartite complex with WWC1 and DDR1, but predominantly in the absence of collagen. Component of the Par polarity complex, composed of at least phosphorylated PRKCZ, PARD3 and TIAM1. Interacts with PDPK1 (via N-terminal region). Interacts with WDFY2 (via WD repeats 1-3). Interacts with VAMP2. Forms a complex with WDFY2 and VAMP2. Interacts with APPL1. Interacts with WWC1, WWC2 and WWC3. CDH5 is required for its phosphorylation at Thr-410. Phosphorylated by protein kinase PDPK1; phosphorylation is inhibited by the apoptotic C-terminal cleavage product of PKN2. Phosphorylation at Thr-410 by PI3K activates the kinase. Isoform 1: In brain, expressed in hippocampus, neocortex and cerebellum (at protein level). Also expressed in lung, liver, kidney, testis and to a lesser extent in pancreas, intestine and skin (at protein level). Isoform 2: Specifically expressed in brain where it localizes to the hippocampus, neocortex and cerebellum (at protein level).

The protein localises to the cytoplasm. The protein resides in the endosome. It is found in the cell junction. Its subcellular location is the membrane. It catalyses the reaction L-seryl-[protein] + ATP = O-phospho-L-seryl-[protein] + ADP + H(+). It carries out the reaction L-threonyl-[protein] + ATP = O-phospho-L-threonyl-[protein] + ADP + H(+). Its activity is regulated as follows. Atypical PKCs (PRKCI and PRKCZ) exhibit an elevated basal enzymatic activity (that may be due to the interaction with SMG1 or SQSTM1) and are not regulated by diacylglycerol, phosphatidylserine, phorbol esters or calcium ions. Two specific sites, Thr-410 (activation loop of the kinase domain) and Thr-560 (turn motif), need to be phosphorylated for its full activation. Phosphatidylinositol 3,4,5-trisphosphate might be a physiological activator. Isoform 2: Constitutively active. Calcium- and diacylglycerol-independent serine/threonine-protein kinase that functions in phosphatidylinositol 3-kinase (PI3K) pathway and mitogen-activated protein (MAP) kinase cascade, and is involved in NF-kappa-B activation, mitogenic signaling, cell proliferation, cell polarity, inflammatory response and maintenance of long-term potentiation (LTP). Upon lipopolysaccharide (LPS) treatment in macrophages, or following mitogenic stimuli, functions downstream of PI3K to activate MAP2K1/MEK1-MAPK1/ERK2 signaling cascade independently of RAF1 activation. Required for insulin-dependent activation of AKT3, but may function as an adapter rather than a direct activator. Upon insulin treatment may act as a downstream effector of PI3K and contribute to the activation of translocation of the glucose transporter SLC2A4/GLUT4 and subsequent glucose transport in adipocytes. In EGF-induced cells, binds and activates MAP2K5/MEK5-MAPK7/ERK5 independently of its kinase activity and can activate JUN promoter through MEF2C. Through binding with SQSTM1/p62, functions in interleukin-1 signaling and activation of NF-kappa-B with the specific adapters RIPK1 and TRAF6. Participates in TNF-dependent transactivation of NF-kappa-B by phosphorylating and activating IKBKB kinase, which in turn leads to the degradation of NF-kappa-B inhibitors. In migrating astrocytes, forms a cytoplasmic complex with PARD6A and is recruited by CDC42 to function in the establishment of cell polarity along with the microtubule motor and dynein. In association with FEZ1, stimulates neuronal differentiation in PC12 cells. In the inflammatory response, is required for the T-helper 2 (Th2) differentiation process, including interleukin production, efficient activation of JAK1 and the subsequent phosphorylation and nuclear translocation of STAT6. May be involved in development of allergic airway inflammation (asthma), a process dependent on Th2 immune response. In the NF-kappa-B-mediated inflammatory response, can relieve SETD6-dependent repression of NF-kappa-B target genes by phosphorylating the RELA subunit at 'Ser-311'. Phosphorylates VAMP2 in vitro. Phosphorylates and activates LRRK1, which phosphorylates RAB proteins involved in intracellular trafficking. Functionally, involved in late synaptic long term potentiation phase in CA1 hippocampal cells and long term memory maintenance. This Rattus norvegicus (Rat) protein is Protein kinase C zeta type (Prkcz).